Consider the following 418-residue polypeptide: MERRAQPVSAAVAPVTGRRKGAAASRKWMVVPAVGEERRVEFGKHQIMKMTGLPGRDLRVLDPVLSYPSTILGRDRAIVVRLQGVKAIITATEVLVPDHDDVLLASFLLDLRSRLSLPDAAPSTNPAAADRGNGTEQGDQGSVPGLAISGAGNAKIPPFEFKVLEVCLEHACKDLESQTRSLEKEAYPALDKLGSKVSTLNLDHVRNLKSRMVDLSGRVQKIRDELEHLLDDDMDMSEMYLTRKLSFQGLSGSLSRADSHKYASVDHDDDREEEDHDDETESGRESSVYVKPDIEELEMLLEAYFVQIDGTLNTLYHIREYADDTEDYINIMLDEKQNQLLQMGVMLTTATVVVTAGIVVVSLFGMNIHIDLMKDPETPEMVRMSNMHFWETTFGTVAGCIAIYLLAIYAGRKSKILQ.

The disordered stretch occupies residues 119 to 146 (DAAPSTNPAAADRGNGTEQGDQGSVPGL). The stretch at 166-232 (VCLEHACKDL…RDELEHLLDD (67 aa)) forms a coiled coil. Positions 258–268 (DSHKYASVDHD) are enriched in basic and acidic residues. A disordered region spans residues 258–287 (DSHKYASVDHDDDREEEDHDDETESGRESS). A compositionally biased stretch (acidic residues) spans 269-280 (DDREEEDHDDET). Residues 344 to 364 (GVMLTTATVVVTAGIVVVSLF) traverse the membrane as a helical segment. The short motif at 365–367 (GMN) is the Required for magnesium transport activity element. The helical transmembrane segment at 389–409 (FWETTFGTVAGCIAIYLLAIY) threads the bilayer.

Belongs to the CorA metal ion transporter (MIT) (TC 1.A.35.5) family.

It is found in the membrane. Magnesium transporter that may mediate the influx of magnesium. This is Magnesium transporter MRS2-E (MRS2-E) from Oryza sativa subsp. indica (Rice).